Here is a 103-residue protein sequence, read N- to C-terminus: Integration host factor subunit alpha (103 aa).

The protein belongs to the bacterial histone-like protein family. Heterodimer of an alpha and a beta chain.

In terms of biological role, this protein is one of the two subunits of integration host factor, a specific DNA-binding protein that functions in genetic recombination as well as in transcriptional and translational control. This is Integration host factor subunit alpha from Bartonella bacilliformis (strain ATCC 35685 / KC583 / Herrer 020/F12,63).